Reading from the N-terminus, the 344-residue chain is Arginine N-succinyltransferase (344 aa).

Leu-125 serves as a coordination point for succinyl-CoA. The Proton donor role is filled by His-229.

It belongs to the arginine N-succinyltransferase family.

It catalyses the reaction succinyl-CoA + L-arginine = N(2)-succinyl-L-arginine + CoA + H(+). Its pathway is amino-acid degradation; L-arginine degradation via AST pathway; L-glutamate and succinate from L-arginine: step 1/5. Functionally, catalyzes the transfer of succinyl-CoA to arginine to produce N(2)-succinylarginine. In Shigella boydii serotype 18 (strain CDC 3083-94 / BS512), this protein is Arginine N-succinyltransferase.